Reading from the N-terminus, the 402-residue chain is Putative F-box protein At3g23960 (402 aa).

The interval 1–23 is disordered; the sequence is MRSRQLHNVSEDRETLSRRNKRS. The 48-residue stretch at 26-73 folds into the F-box domain; it reads SLNGHIPIDLLIEIFLKLPVKSIATCRSVSKFWTYVLGRQDFTELFLT.

The protein is Putative F-box protein At3g23960 of Arabidopsis thaliana (Mouse-ear cress).